The following is a 182-amino-acid chain: ATP-dependent protease subunit HslV (182 aa).

T9 is an active-site residue. A167, C170, and T173 together coordinate Na(+).

Belongs to the peptidase T1B family. HslV subfamily. In terms of assembly, a double ring-shaped homohexamer of HslV is capped on each side by a ring-shaped HslU homohexamer. The assembly of the HslU/HslV complex is dependent on binding of ATP.

The protein resides in the cytoplasm. It catalyses the reaction ATP-dependent cleavage of peptide bonds with broad specificity.. With respect to regulation, allosterically activated by HslU binding. Its function is as follows. Protease subunit of a proteasome-like degradation complex believed to be a general protein degrading machinery. The chain is ATP-dependent protease subunit HslV from Enterococcus faecalis (strain ATCC 700802 / V583).